The primary structure comprises 291 residues: Proteasome subunit beta (291 aa).

A propeptide spans 1–56 (MTRSFPDRLPTNLAFPGISVINQSSFVDLLRRQAPELLPVSLGGGQSGGGQQLSHG) (removed in mature form; by autocatalysis). The active-site Nucleophile is threonine 57.

Belongs to the peptidase T1B family. The 20S proteasome core is composed of 14 alpha and 14 beta subunits that assemble into four stacked heptameric rings, resulting in a barrel-shaped structure. The two inner rings, each composed of seven catalytic beta subunits, are sandwiched by two outer rings, each composed of seven alpha subunits. The catalytic chamber with the active sites is on the inside of the barrel. Has a gated structure, the ends of the cylinder being occluded by the N-termini of the alpha-subunits. Is capped by the proteasome-associated ATPase, ARC.

Its subcellular location is the cytoplasm. The catalysed reaction is Cleavage of peptide bonds with very broad specificity.. It functions in the pathway protein degradation; proteasomal Pup-dependent pathway. Its activity is regulated as follows. The formation of the proteasomal ATPase ARC-20S proteasome complex, likely via the docking of the C-termini of ARC into the intersubunit pockets in the alpha-rings, may trigger opening of the gate for substrate entry. Interconversion between the open-gate and close-gate conformations leads to a dynamic regulation of the 20S proteasome proteolysis activity. Functionally, component of the proteasome core, a large protease complex with broad specificity involved in protein degradation. This is Proteasome subunit beta from Mycobacterium leprae (strain Br4923).